The primary structure comprises 174 residues: Endoribonuclease YbeY (174 aa).

3 residues coordinate Zn(2+): H124, H128, and H134.

It belongs to the endoribonuclease YbeY family. Zn(2+) is required as a cofactor.

It is found in the cytoplasm. In terms of biological role, single strand-specific metallo-endoribonuclease involved in late-stage 70S ribosome quality control and in maturation of the 3' terminus of the 16S rRNA. This is Endoribonuclease YbeY from Synechococcus elongatus (strain ATCC 33912 / PCC 7942 / FACHB-805) (Anacystis nidulans R2).